Consider the following 204-residue polypeptide: uncharacterized protein (204 aa).

Disordered regions lie at residues 1 to 37 (MRAL…GSVS) and 159 to 204 (GYRP…DGEL). Positions 28–37 (GRGPRAGSVS) are enriched in low complexity. The region spanning 88–175 (PYRLYVERLD…LPKEKWPAEA (88 aa)) is the WGR domain. Basic and acidic residues-rich tracts occupy residues 166–179 (LPKE…EHES) and 188–204 (PEGH…DGEL).

This is an uncharacterized protein from Sinorhizobium fredii (strain NBRC 101917 / NGR234).